Consider the following 393-residue polypeptide: Homeobox protein knotted-1-like 4 (393 aa).

The segment covering 1–13 (MAFHNNHFNHFTD) has biased composition (polar residues). 2 disordered regions span residues 1–39 (MAFHNNHFNHFTDQQQHQPPPPPQQQQQQHFQESAPPNW) and 81–114 (QRGNTANNNNNETSGDVIEDVPGGEESMIGEKKE). An ELK domain is found at 286–306 (ELKHELKQGYKEKIVDIREEI). The homeobox; TALE-type DNA-binding region spans 307–370 (LRKRRAGKLP…NQRKRNWHSN (64 aa)). The disordered stretch occupies residues 363-393 (RKRNWHSNPSSSTVSKNKRRSNAGENSGRDR). Residues 368–377 (HSNPSSSTVS) show a composition bias toward polar residues.

It belongs to the TALE/KNOX homeobox family. In terms of assembly, may form heterodimeric complex with the TALE/BELL proteins. Interacts with OFP1, OFP2, OFP4 and OFP12. Interacts with KNATM-B.

It localises to the nucleus. The sequence is that of Homeobox protein knotted-1-like 4 (KNAT4) from Arabidopsis thaliana (Mouse-ear cress).